Consider the following 242-residue polypeptide: Small ribosomal subunit protein uS3 (242 aa).

Residues 39–110 form the KH type-2 domain; it reads IRKFIHKKYG…QVRINVVEVE (72 aa). The segment at 216-242 is disordered; it reads QTMPVGANPRRRASRRPQQFEDRSNEG. A compositionally biased stretch (basic and acidic residues) spans 233-242; that stretch reads QQFEDRSNEG.

Belongs to the universal ribosomal protein uS3 family. As to quaternary structure, part of the 30S ribosomal subunit. Forms a tight complex with proteins S10 and S14.

Functionally, binds the lower part of the 30S subunit head. Binds mRNA in the 70S ribosome, positioning it for translation. This chain is Small ribosomal subunit protein uS3, found in Synechococcus sp. (strain CC9902).